The following is a 134-amino-acid chain: Protein E6 (134 aa).

2 zinc fingers span residues 15 to 51 (CLQCKKALGSLDALKCKNHKYRRVHRGGKPYGMCQIC) and 88 to 124 (CYYCGCVLSDSEKDRHALDHEGYLYVRGRARGRCYSC).

The protein belongs to the papillomaviridae E6 protein family. Forms homodimers. Interacts with ubiquitin-protein ligase UBE3A/E6-AP; this interaction stimulates UBE3A ubiquitin activity. Interacts with host BAK1.

It localises to the host cytoplasm. Its subcellular location is the host nucleus. Plays a major role in the induction and maintenance of cellular transformation. E6 associates with host UBE3A/E6-AP ubiquitin-protein ligase and modulates its activity. Protects host keratinocytes from apoptosis by mediating the degradation of host BAK1. May also inhibit host immune response. The protein is Protein E6 of Bos taurus (Bovine).